We begin with the raw amino-acid sequence, 567 residues long: DNA ligase (567 aa).

Residue Glu246 participates in ATP binding. Lys248 (N6-AMP-lysine intermediate) is an active-site residue. ATP is bound by residues Arg253, Arg268, Glu298, Phe339, Arg415, and Lys421.

It belongs to the ATP-dependent DNA ligase family. Requires Mg(2+) as cofactor.

The enzyme catalyses ATP + (deoxyribonucleotide)n-3'-hydroxyl + 5'-phospho-(deoxyribonucleotide)m = (deoxyribonucleotide)n+m + AMP + diphosphate.. DNA ligase that seals nicks in double-stranded DNA during DNA replication, DNA recombination and DNA repair. The protein is DNA ligase of Nanoarchaeum equitans (strain Kin4-M).